A 591-amino-acid chain; its full sequence is UvrABC system protein C (591 aa).

The GIY-YIG domain maps to 14–91 (DQPGCYLMKD…IKKHDPKYNV (78 aa)). Positions 196 to 231 (KEVKVELEKKMHKAAEELNFERAKELRDTLGYMEAV) constitute a UVR domain.

It belongs to the UvrC family. Interacts with UvrB in an incision complex.

Its subcellular location is the cytoplasm. Functionally, the UvrABC repair system catalyzes the recognition and processing of DNA lesions. UvrC both incises the 5' and 3' sides of the lesion. The N-terminal half is responsible for the 3' incision and the C-terminal half is responsible for the 5' incision. This is UvrABC system protein C from Halalkalibacterium halodurans (strain ATCC BAA-125 / DSM 18197 / FERM 7344 / JCM 9153 / C-125) (Bacillus halodurans).